Reading from the N-terminus, the 167-residue chain is uncharacterized protein (167 aa).

This is an uncharacterized protein from Escherichia coli (strain K12).